The chain runs to 84 residues: ATP synthase subunit c (84 aa).

Transmembrane regions (helical) follow at residues 8-28 and 56-76; these read VAGM…GGGI and IIGS…AILL.

Belongs to the ATPase C chain family. As to quaternary structure, F-type ATPases have 2 components, F(1) - the catalytic core - and F(0) - the membrane proton channel. F(1) has five subunits: alpha(3), beta(3), gamma(1), delta(1), epsilon(1). F(0) has three main subunits: a(1), b(2) and c(10-14). The alpha and beta chains form an alternating ring which encloses part of the gamma chain. F(1) is attached to F(0) by a central stalk formed by the gamma and epsilon chains, while a peripheral stalk is formed by the delta and b chains.

It is found in the cell membrane. In terms of biological role, f(1)F(0) ATP synthase produces ATP from ADP in the presence of a proton or sodium gradient. F-type ATPases consist of two structural domains, F(1) containing the extramembraneous catalytic core and F(0) containing the membrane proton channel, linked together by a central stalk and a peripheral stalk. During catalysis, ATP synthesis in the catalytic domain of F(1) is coupled via a rotary mechanism of the central stalk subunits to proton translocation. Its function is as follows. Key component of the F(0) channel; it plays a direct role in translocation across the membrane. A homomeric c-ring of between 10-14 subunits forms the central stalk rotor element with the F(1) delta and epsilon subunits. The protein is ATP synthase subunit c of Clostridium novyi (strain NT).